The primary structure comprises 429 residues: Histidine--tRNA ligase (429 aa).

This sequence belongs to the class-II aminoacyl-tRNA synthetase family. Homodimer.

It localises to the cytoplasm. It carries out the reaction tRNA(His) + L-histidine + ATP = L-histidyl-tRNA(His) + AMP + diphosphate + H(+). This is Histidine--tRNA ligase from Streptococcus pneumoniae (strain Hungary19A-6).